A 439-amino-acid polypeptide reads, in one-letter code: MPEGNKIDLSGDGGVLKEILKEGTGTETPHSGCTVSLHYTGRLVDGTEFDSSLSRNEPFEFSLGKGNVIKAFDMGVATMKLGERCFLTCAPNYAYGAAGSPPAIPPDATLIFELEMLGWKGEDLSPNQDGSIDRTILEASDKKRTPSDGAFVKAHISGSFEGRVFEDRDVEFDYGEGKAIGIIDGVEIALEKMNVGETSRIKIQAKYAFGAKGNEEFKIPPNATVEYTVKLVDCGKGLEEWKLSDEERLAEAKVYKEKGTNYFKKENWALAIKMYTKCKNILPTTVHTNEEVKKIKVATHSNIALCHQKSNDHFEAKQECNEVLALDKNNVKALYRRGQCNLTINELEDALEDFQKVIQLEPGNKAAANQVIICKQKLKESKNKEKKLYANMFTKLAANDKETEPPRETDVLSKCGEWSEEDAKREAELTLERDNIIMI.

2 consecutive PPIase FKBP-type domains span residues 32 to 120 (GCTV…LGWK) and 149 to 235 (GAFV…VDCG). TPR repeat units follow at residues 252–285 (AKVYKEKGTNYFKKENWALAIKMYTKCKNILPTT), 297–330 (VATHSNIALCHQKSNDHFEAKQECNEVLALDKNN), and 331–364 (VKALYRRGQCNLTINELEDALEDFQKVIQLEPGN).

In terms of assembly, interacts with inaD and trpl, and may be part of the inaD signaling complex. As to expression, expression in the embryo is limited to three tissues: lymph glands, Garland cells and oenocyte cells.

It catalyses the reaction [protein]-peptidylproline (omega=180) = [protein]-peptidylproline (omega=0). Functionally, may have a role in phototransduction; inhibits or prevents Ca(2+) induced stimulation of the trpl ion channel. The sequence is that of FK506-binding protein 59 from Drosophila melanogaster (Fruit fly).